Here is a 194-residue protein sequence, read N- to C-terminus: Inosine triphosphate pyrophosphatase (194 aa).

10–15 (TSSKKK) is a binding site for ITP. Glu37 contributes to the Mg(2+) binding site. ITP-binding positions include Lys49, 65-66 (DV), Lys82, 142-145 (FGWD), Lys166, and 171-172 (HR).

Belongs to the HAM1 NTPase family. Homodimer. It depends on Mg(2+) as a cofactor. The cofactor is Mn(2+).

The protein resides in the cytoplasm. It carries out the reaction ITP + H2O = IMP + diphosphate + H(+). The enzyme catalyses dITP + H2O = dIMP + diphosphate + H(+). The catalysed reaction is XTP + H2O = XMP + diphosphate + H(+). Its function is as follows. Pyrophosphatase that hydrolyzes non-canonical purine nucleotides such as inosine triphosphate (ITP), deoxyinosine triphosphate (dITP) or xanthosine 5'-triphosphate (XTP) to their respective monophosphate derivatives. The enzyme does not distinguish between the deoxy- and ribose forms. Probably excludes non-canonical purines from RNA and DNA precursor pools, thus preventing their incorporation into RNA and DNA and avoiding chromosomal lesions. The protein is Inosine triphosphate pyrophosphatase of Giardia intestinalis (strain ATCC 50803 / WB clone C6) (Giardia lamblia).